Consider the following 85-residue polypeptide: Large ribosomal subunit protein bL27 (85 aa).

The protein belongs to the bacterial ribosomal protein bL27 family.

This chain is Large ribosomal subunit protein bL27, found in Variovorax paradoxus (strain S110).